Consider the following 224-residue polypeptide: CDP-diacylglycerol--inositol 3-phosphatidyltransferase (224 aa).

Over 1 to 8 the chain is Cytoplasmic; the sequence is MTIAEHDN. A helical membrane pass occupies residues 9-29; it reads VFIFVPNLIGYARIVLALIAF. The Lumenal segment spans residues 30–35; the sequence is WFMSTN. A helical membrane pass occupies residues 36-52; it reads YVISGWCYVTSALLDAV. Residues D50 and D53 each contribute to the Mg(2+) site. At 53 to 76 the chain is on the cytoplasmic side; it reads DGQAARAFNQSTRFGAMLDQLTDR. Residues G54, R58, and T64 each contribute to the a CDP-1,2-diacyl-sn-glycerol site. Residues D71 and D75 each contribute to the Mg(2+) site. Catalysis depends on D75, which acts as the Proton acceptor. The helical transmembrane segment at 77–97 threads the bilayer; sequence CGTTGLLVTLAYFYPRYMFWF. A topological domain (lumenal) is located at residue Q98. The chain crosses the membrane as a helical span at residues 99 to 119; it reads LSIAIDVACHWLFMQTSVVVG. Residues 120 to 138 are Cytoplasmic-facing; sequence RSSHKVNDNFIMRLYYQKD. A helical membrane pass occupies residues 139 to 159; the sequence is ILTFMCCVNELFYVCLYLLHF. Over 160 to 163 the chain is Lumenal; the sequence is TYGP. Residues 164 to 184 traverse the membrane as a helical segment; the sequence is LIFGASLFKILAFLTGPFAVL. Topologically, residues 185–224 are cytoplasmic; it reads KALISVMHAYVAGIDLAAVDVRERQERRQKSEPVSGKKVE.

It belongs to the CDP-alcohol phosphatidyltransferase class-I family. It depends on Mn(2+) as a cofactor. The cofactor is Mg(2+). In adults, expression is higher in the head than in the body (at protein level).

The protein resides in the apical cell membrane. Its subcellular location is the lateral cell membrane. The enzyme catalyses a CDP-1,2-diacyl-sn-glycerol + myo-inositol = a 1,2-diacyl-sn-glycero-3-phospho-(1D-myo-inositol) + CMP + H(+). Its function is as follows. Catalyzes the biosynthesis of phosphatidylinositol (PtdIns) as well as PtdIns:inositol exchange reaction. May thus act to reduce an excessive cellular PtdIns content. The exchange activity is due to the reverse reaction of PtdIns synthase and is dependent on CMP, which is tightly bound to the enzyme. Required for the regeneration of the signaling molecule phosphatidylinositol 4,5-bisphosphate (PtdInsP2) from phosphatidic acid (PA) and maintenance of its steady supply during signaling, thus playing an essential role during phospholipase C-mediated transduction. This function is essential in photoreceptors for light-activated recycling of PtdInsP2 during phototransduction. As a key enzyme of the phosphoinositide pathway, indirectly involved in the polarized secretion of basal membrane (BM) proteins in follicle epithelial (FE) cells through promoting PtdInsP2 synthesis in the apical and lateral plasma membranes of FE cells. PtdInsP2 controls the localization of Crag and perhaps the localization and expression of strat, both of which are essential for restricting the secretion of BM proteins to the basal surface. The sequence is that of CDP-diacylglycerol--inositol 3-phosphatidyltransferase from Drosophila melanogaster (Fruit fly).